Consider the following 344-residue polypeptide: Ferrochelatase (344 aa).

Positions 211 and 292 each coordinate Fe cation.

It belongs to the ferrochelatase family.

The protein localises to the cytoplasm. It carries out the reaction heme b + 2 H(+) = protoporphyrin IX + Fe(2+). It participates in porphyrin-containing compound metabolism; protoheme biosynthesis; protoheme from protoporphyrin-IX: step 1/1. In terms of biological role, catalyzes the ferrous insertion into protoporphyrin IX. This Methylobacillus flagellatus (strain ATCC 51484 / DSM 6875 / VKM B-1610 / KT) protein is Ferrochelatase.